A 278-amino-acid chain; its full sequence is S-formylglutathione hydrolase YeiG (278 aa).

Active-site charge relay system residues include S145, D223, and H256.

It belongs to the esterase D family.

The enzyme catalyses S-formylglutathione + H2O = formate + glutathione + H(+). Functionally, serine hydrolase involved in the detoxification of formaldehyde. Hydrolyzes S-formylglutathione to glutathione and formate. This Shigella boydii serotype 4 (strain Sb227) protein is S-formylglutathione hydrolase YeiG (yeiG).